Here is a 127-residue protein sequence, read N- to C-terminus: Small ribosomal subunit protein uS13 (127 aa).

The tract at residues 97–127 (PVRGQRTKTNARTRKGPRKTVAGKKGVKDLR) is disordered. Over residues 101-118 (QRTKTNARTRKGPRKTVA) the composition is skewed to basic residues.

It belongs to the universal ribosomal protein uS13 family. In terms of assembly, part of the 30S ribosomal subunit. Forms a loose heterodimer with protein S19. Forms two bridges to the 50S subunit in the 70S ribosome.

In terms of biological role, located at the top of the head of the 30S subunit, it contacts several helices of the 16S rRNA. In the 70S ribosome it contacts the 23S rRNA (bridge B1a) and protein L5 of the 50S subunit (bridge B1b), connecting the 2 subunits; these bridges are implicated in subunit movement. Contacts the tRNAs in the A and P-sites. The sequence is that of Small ribosomal subunit protein uS13 from Rhodopirellula baltica (strain DSM 10527 / NCIMB 13988 / SH1).